Consider the following 123-residue polypeptide: Ribonuclease P protein component (123 aa).

It belongs to the RnpA family. Consists of a catalytic RNA component (M1 or rnpB) and a protein subunit.

The enzyme catalyses Endonucleolytic cleavage of RNA, removing 5'-extranucleotides from tRNA precursor.. In terms of biological role, RNaseP catalyzes the removal of the 5'-leader sequence from pre-tRNA to produce the mature 5'-terminus. It can also cleave other RNA substrates such as 4.5S RNA. The protein component plays an auxiliary but essential role in vivo by binding to the 5'-leader sequence and broadening the substrate specificity of the ribozyme. The sequence is that of Ribonuclease P protein component from Streptococcus pneumoniae serotype 4 (strain ATCC BAA-334 / TIGR4).